Reading from the N-terminus, the 87-residue chain is Large ribosomal subunit protein bL27 (87 aa).

The disordered stretch occupies residues 1 to 21 (MAHKKAGGSSRNGRDSESKRL).

It belongs to the bacterial ribosomal protein bL27 family.

This chain is Large ribosomal subunit protein bL27, found in Paraburkholderia xenovorans (strain LB400).